Here is a 309-residue protein sequence, read N- to C-terminus: MSENIIRIATRKSPLAMWQAEFVKAELERIHPGLTVELLPMSTKGDVILDTPLAKIGGKGLFVKELEVAMLENRADIAVHSMKDLPVEFPEGLGLQVICEREDPRDAFVSNNYKSISELPQGAVVGTSSLRRQCQIRAARPDLVIKDLRGNVGTRLAKLDSGDYDAIILAAAGLIRLKLNERIANFISAEESLPANGQGAVGIECRTDDARVKALLAPLEHLETRYRVLAERAMNTRLEGGCQVPIGAFAEINGDNLTLRGLVGNPDGSQIIIGTVSGSKTDAVALGESLAEDLLSRGAKTILDAVYAS.

Cysteine 242 carries the S-(dipyrrolylmethanemethyl)cysteine modification.

Belongs to the HMBS family. Monomer. Requires dipyrromethane as cofactor.

The enzyme catalyses 4 porphobilinogen + H2O = hydroxymethylbilane + 4 NH4(+). It participates in porphyrin-containing compound metabolism; protoporphyrin-IX biosynthesis; coproporphyrinogen-III from 5-aminolevulinate: step 2/4. In terms of biological role, tetrapolymerization of the monopyrrole PBG into the hydroxymethylbilane pre-uroporphyrinogen in several discrete steps. The sequence is that of Porphobilinogen deaminase from Shewanella frigidimarina (strain NCIMB 400).